Consider the following 373-residue polypeptide: Potential protein lysine methyltransferase SET6 (373 aa).

The 327-residue stretch at 12 to 338 (PFFQVRQTKW…KDEQICIDYS (327 aa)) folds into the SET domain.

The protein belongs to the class V-like SAM-binding methyltransferase superfamily.

Involved in resistance to compounds that target ergosterol biosynthesis, including fenpropimorph, dyclonine, and alverine citrate. Since a deletion in the absence of these compounds does not have an effect on growth, is more likely to be involved in compound availability. This chain is Potential protein lysine methyltransferase SET6 (SET6), found in Saccharomyces cerevisiae (strain ATCC 204508 / S288c) (Baker's yeast).